The sequence spans 158 residues: NAD(P)H-quinone oxidoreductase subunit J, chloroplastic (158 aa).

Belongs to the complex I 30 kDa subunit family. In terms of assembly, NDH is composed of at least 16 different subunits, 5 of which are encoded in the nucleus.

Its subcellular location is the plastid. It is found in the chloroplast thylakoid membrane. The catalysed reaction is a plastoquinone + NADH + (n+1) H(+)(in) = a plastoquinol + NAD(+) + n H(+)(out). It catalyses the reaction a plastoquinone + NADPH + (n+1) H(+)(in) = a plastoquinol + NADP(+) + n H(+)(out). NDH shuttles electrons from NAD(P)H:plastoquinone, via FMN and iron-sulfur (Fe-S) centers, to quinones in the photosynthetic chain and possibly in a chloroplast respiratory chain. The immediate electron acceptor for the enzyme in this species is believed to be plastoquinone. Couples the redox reaction to proton translocation, and thus conserves the redox energy in a proton gradient. This is NAD(P)H-quinone oxidoreductase subunit J, chloroplastic from Buxus microphylla (Littleleaf boxwood).